Consider the following 140-residue polypeptide: Large ribosomal subunit protein uL11 (140 aa).

Belongs to the universal ribosomal protein uL11 family. As to quaternary structure, part of the ribosomal stalk of the 50S ribosomal subunit. Interacts with L10 and the large rRNA to form the base of the stalk. L10 forms an elongated spine to which L12 dimers bind in a sequential fashion forming a multimeric L10(L12)X complex. One or more lysine residues are methylated.

Forms part of the ribosomal stalk which helps the ribosome interact with GTP-bound translation factors. This Caldanaerobacter subterraneus subsp. tengcongensis (strain DSM 15242 / JCM 11007 / NBRC 100824 / MB4) (Thermoanaerobacter tengcongensis) protein is Large ribosomal subunit protein uL11.